Here is a 477-residue protein sequence, read N- to C-terminus: Serine/threonine-protein kinase pakC (477 aa).

Residues 13 to 108 enclose the PH domain; the sequence is SPDKEGELKK…WMKAVEKGSE (96 aa). Residues 112 to 125 form the CRIB domain; that stretch reads VSQPFNLKHEVHVD. The Protein kinase domain maps to 204-458; that stretch reads YKNMTKIGEG…ATDLLKHPFM (255 aa). Residues 210-218 and Lys-233 contribute to the ATP site; that span reads IGEGAAGEV. Asp-326 functions as the Proton acceptor in the catalytic mechanism.

Belongs to the protein kinase superfamily. STE Ser/Thr protein kinase family. STE20 subfamily. In terms of assembly, interacts with GTP-bound racB. Mg(2+) serves as cofactor.

The protein localises to the cytoplasm. It is found in the membrane. The enzyme catalyses L-seryl-[protein] + ATP = O-phospho-L-seryl-[protein] + ADP + H(+). The catalysed reaction is L-threonyl-[protein] + ATP = O-phospho-L-threonyl-[protein] + ADP + H(+). Its activity is regulated as follows. Kinase activity is rapidly and transiently increased in response to chemoattractant stimulation. Functionally, has role in the regulation of chemotaxis. The chain is Serine/threonine-protein kinase pakC (pakC) from Dictyostelium discoideum (Social amoeba).